An 835-amino-acid chain; its full sequence is Ribonucleoside-diphosphate reductase large subunit (835 aa).

Residues serine 222, 237-238, glycine 266, 447-451, and 660-664 contribute to the substrate site; these read SC, NLCCE, and PSASS. The cysteines at positions 238 and 464 are disulfide-linked. Asparagine 447 (proton acceptor) is an active-site residue. The active-site Cysteine radical intermediate is cysteine 449. The active-site Proton acceptor is glutamate 451.

Belongs to the ribonucleoside diphosphate reductase large chain family. As to quaternary structure, heterotetramer composed of a homodimer of the large subunit (R1) and a homodimer of the small subunit (R2). Larger multisubunit protein complex are also active, composed of (R1)n(R2)n.

It carries out the reaction a 2'-deoxyribonucleoside 5'-diphosphate + [thioredoxin]-disulfide + H2O = a ribonucleoside 5'-diphosphate + [thioredoxin]-dithiol. Its function is as follows. Ribonucleoside-diphosphate reductase holoenzyme provides the precursors necessary for viral DNA synthesis. Allows virus growth in non-dividing cells. Catalyzes the biosynthesis of deoxyribonucleotides from the corresponding ribonucleotides. This chain is Ribonucleoside-diphosphate reductase large subunit, found in Magallana gigas (Pacific oyster).